Reading from the N-terminus, the 127-residue chain is Large ribosomal subunit protein bL17 (127 aa).

It belongs to the bacterial ribosomal protein bL17 family. Part of the 50S ribosomal subunit. Contacts protein L32.

The sequence is that of Large ribosomal subunit protein bL17 from Salmonella paratyphi A (strain AKU_12601).